The chain runs to 243 residues: DNA repair protein RecO (243 aa).

This sequence belongs to the RecO family.

Involved in DNA repair and RecF pathway recombination. This Thermobifida fusca (strain YX) protein is DNA repair protein RecO.